A 545-amino-acid polypeptide reads, in one-letter code: Prolyl 3-hydroxylase OGFOD1 (545 aa).

Positions 1–23 (MNGKRPADPGPARPMKKGKKQVS) are disordered. One can recognise a Fe2OG dioxygenase domain in the interval 137-239 (PTIDMSCAKY…RLSISGWFYG (103 aa)). His155 and Asp157 together coordinate Fe cation. Tyr169 contacts 2-oxoglutarate. His218 lines the Fe cation pocket. 2-oxoglutarate is bound at residue Arg230. Residues 371–380 (SEDDETEEKG) are compositionally biased toward acidic residues. Positions 371–437 (SEDDETEEKG…EAKKESSVPM (67 aa)) are disordered. Low complexity predominate over residues 383–393 (ETASAAAGTEE). Polar residues predominate over residues 402–417 (PENNQVAAGSHSQENG).

The protein belongs to the TPA1 family. As to quaternary structure, monomer. It depends on Fe(2+) as a cofactor. Requires L-ascorbate as cofactor.

It is found in the cytoplasm. Its subcellular location is the nucleus. The enzyme catalyses [ribosomal protein uS12]-L-proline + 2-oxoglutarate + O2 = [ribosomal protein uS12]-(3S)-3-hydroxy-L-proline + succinate + CO2. Its function is as follows. Prolyl 3-hydroxylase that catalyzes 3-hydroxylation of 'Pro-62' of small ribosomal subunit uS12 (RPS23), thereby regulating protein translation termination efficiency. Involved in stress granule formation. This chain is Prolyl 3-hydroxylase OGFOD1 (Ogfod1), found in Mus musculus (Mouse).